The chain runs to 136 residues: Orexigenic neuropeptide QRFP (136 aa).

An N-terminal signal peptide occupies residues 1–18; sequence MVRPYPLIYFLFLPLGAC. Positions 19–90 are excised as a propeptide; sequence FPLLDRREPT…HAGCRFRFGR (72 aa). A Pyrrolidone carboxylic acid modification is found at Q91. Position 133 is a phenylalanine amide (F133).

It belongs to the RFamide neuropeptide family. In terms of assembly, ligand for the G-protein coupled receptor QRFPR/GPR103. Expressed widely in the brain with highest expression levels in the cerebellum, medulla, pituitary, retina, vestibular nucleus, and white matter. Also expressed in the bladder, colon, coronary artery, parathyroid gland, prostate, testis, and thyroid.

It is found in the secreted. In terms of biological role, stimulates feeding behavior, metabolic rate and locomotor activity and increases blood pressure. May have orexigenic activity. May promote aldosterone secretion by the adrenal gland. The sequence is that of Orexigenic neuropeptide QRFP from Homo sapiens (Human).